The primary structure comprises 186 residues: Serine hydrolase RBBP9 (186 aa).

Residues 63–67 (LHCDE) form an involved in binding to RB1 region. Active-site charge relay system residues include serine 75, aspartate 138, and histidine 165.

It belongs to the RBBP9 family. Interacts with RB1; the interaction disrupts RB1 binding to E2F1. Interacts with RBL1 and RBL2. As to expression, expressed at higher levels in tumor tissues such as carcinoma.

It catalyses the reaction valacyclovir + H2O = acyclovir + L-valine + H(+). Its activity is regulated as follows. Inhibited by the natural product emetine produced by the ipecac root. In terms of biological role, serine hydrolase. Catalyzes the hydrolytic activation of amino acid ester of the antiviral prodrug valacyclovir to its corresponding active drug, acyclovir. May negatively regulate basal or autocrine TGF-beta signaling by suppressing SMAD2-SMAD3 phosphorylation. May play a role in the transformation process due to its capacity to confer resistance to the growth-inhibitory effects of TGF-beta through interaction with RB1 and the subsequent displacement of E2F1. This is Serine hydrolase RBBP9 from Homo sapiens (Human).